The sequence spans 428 residues: Enolase (428 aa).

Gln-162 lines the (2R)-2-phosphoglycerate pocket. The active-site Proton donor is Glu-204. 3 residues coordinate Mg(2+): Asp-241, Glu-283, and Asp-310. Residues Lys-335, Arg-364, Ser-365, and Lys-386 each contribute to the (2R)-2-phosphoglycerate site. Lys-335 acts as the Proton acceptor in catalysis.

This sequence belongs to the enolase family. Requires Mg(2+) as cofactor.

It is found in the cytoplasm. It localises to the secreted. Its subcellular location is the cell surface. It carries out the reaction (2R)-2-phosphoglycerate = phosphoenolpyruvate + H2O. It functions in the pathway carbohydrate degradation; glycolysis; pyruvate from D-glyceraldehyde 3-phosphate: step 4/5. Functionally, catalyzes the reversible conversion of 2-phosphoglycerate (2-PG) into phosphoenolpyruvate (PEP). It is essential for the degradation of carbohydrates via glycolysis. The chain is Enolase from Rhodococcus jostii (strain RHA1).